The sequence spans 89 residues: Putative membrane protein insertion efficiency factor (89 aa).

A disordered region spans residues 68-89 (VPPPNSDARNAPHEAEASSHRL). Positions 77–89 (NAPHEAEASSHRL) are enriched in basic and acidic residues.

This sequence belongs to the UPF0161 family.

The protein resides in the cell inner membrane. In terms of biological role, could be involved in insertion of integral membrane proteins into the membrane. This is Putative membrane protein insertion efficiency factor from Burkholderia thailandensis (strain ATCC 700388 / DSM 13276 / CCUG 48851 / CIP 106301 / E264).